A 78-amino-acid polypeptide reads, in one-letter code: Putative membrane protein insertion efficiency factor (78 aa).

This sequence belongs to the UPF0161 family.

It is found in the cell membrane. Could be involved in insertion of integral membrane proteins into the membrane. The protein is Putative membrane protein insertion efficiency factor of Bacillus thuringiensis subsp. konkukian (strain 97-27).